A 173-amino-acid polypeptide reads, in one-letter code: RNA polymerase sigma factor TcsR (173 aa).

Positions 122–169 (IKDLTQNEKNILRKIYLHGLRESEISRELNISRQAVNKTHLRALEKLK) are sigma-70 factor domain-4. Residues 143 to 162 (ESEISRELNISRQAVNKTHL) constitute a DNA-binding region (H-T-H motif).

It belongs to the sigma-70 factor family.

In terms of biological role, sigma factors are initiation factors that promote the attachment of RNA polymerase to specific initiation sites and are then released. Transcriptional regulator specifically required to activate expression of the toxin gene locus, composed of tcsL and tcdE/utxA. The sequence is that of RNA polymerase sigma factor TcsR from Paraclostridium sordellii (Clostridium sordellii).